The primary structure comprises 426 residues: Glutamate/glutamine/aspartate/asparagine transport system permease protein BztB (426 aa).

8 consecutive transmembrane segments (helical) span residues 25–45, 96–116, 132–152, 211–231, 252–272, 293–313, 340–360, and 396–416; these read SITIQIVVLLLFLAGLVWLLN, LLVSVLGCILATILGTIIGVL, VETFRNIPLLLWILLMGTILA, LPVSLNALAILAVMSASFWGW, WWPSLLILFAPISALLYGLGF, SFTALLIALTLYTAAFIAEIV, SLVILPQALRVIVPPLISQFL, and MLLMMLIYLTISLTISSLMNL. The ABC transmembrane type-1 domain maps to 92–414; the sequence is LLNTLLVSVL…TISLTISSLM (323 aa).

This sequence belongs to the binding-protein-dependent transport system permease family. HisMQ subfamily. As to quaternary structure, bztB and BztC form a heterodimer which can form a membrane complex with a homodimer of BztD.

The protein resides in the cell inner membrane. In terms of biological role, part of a binding-protein-dependent transport system for glutamate, glutamine, aspartate and asparagine. Probably responsible for the translocation of the substrate across the membrane. The polypeptide is Glutamate/glutamine/aspartate/asparagine transport system permease protein BztB (bztB) (Rhodobacter capsulatus (strain ATCC BAA-309 / NBRC 16581 / SB1003)).